Reading from the N-terminus, the 163-residue chain is Ribosome maturation factor RimP (163 aa).

This sequence belongs to the RimP family.

The protein localises to the cytoplasm. Its function is as follows. Required for maturation of 30S ribosomal subunits. The polypeptide is Ribosome maturation factor RimP (Polynucleobacter necessarius subsp. necessarius (strain STIR1)).